We begin with the raw amino-acid sequence, 576 residues long: Lipoprotein LpqB (576 aa).

A signal peptide spans methionine 1 to alanine 16. A lipid anchor (N-palmitoyl cysteine) is attached at cysteine 17. The S-diacylglycerol cysteine moiety is linked to residue cysteine 17.

It belongs to the LpqB lipoprotein family.

The protein localises to the cell membrane. This Bifidobacterium longum (strain NCC 2705) protein is Lipoprotein LpqB.